A 318-amino-acid chain; its full sequence is MPNIKIFSGSSHQDLSQKIADRLGLELGKVVTKKFSNQETCVEIGESVRGEDVYIVQSGCGEINDNLMELLIMINACKIASASRVTAVIPCFPYARQDKKDKSRAPISAKLVANMLSVAGADHIITMDLHASQIQGFFDIPVDNLYAEPAVLKWIRENISEWRNCTIVSPDAGGAKRVTSIADRLNVDFALIHKERKKANEVDRMVLVGDVKDRVAILVDDMADTCGTICHAADKLLSAGATRVYAILTHGIFSGPAISRINNACFEAVVVTNTIPQEDKMKHCSKIQVIDISMILAEAIRRTHNGESVSYLFSHVPL.

96–101 (RQDKKD) serves as a coordination point for ATP. Asp-128, His-130, Asp-139, and Asp-143 together coordinate Mg(2+). An ATP-binding site is contributed by His-130. A binding of phosphoribosylpyrophosphate region spans residues 212–227 (KDRVAILVDDMADTCG).

The protein belongs to the ribose-phosphate pyrophosphokinase family. In terms of assembly, homodimer. The active form is probably a hexamer composed of 3 homodimers. Mg(2+) serves as cofactor.

It carries out the reaction D-ribose 5-phosphate + ATP = 5-phospho-alpha-D-ribose 1-diphosphate + AMP + H(+). The protein operates within metabolic intermediate biosynthesis; 5-phospho-alpha-D-ribose 1-diphosphate biosynthesis; 5-phospho-alpha-D-ribose 1-diphosphate from D-ribose 5-phosphate (route I): step 1/1. Its activity is regulated as follows. Activated by magnesium and inorganic phosphate. Its function is as follows. Catalyzes the synthesis of phosphoribosylpyrophosphate (PRPP) that is essential for nucleotide synthesis. This is Ribose-phosphate pyrophosphokinase 1 (PRPS1) from Bos taurus (Bovine).